The chain runs to 244 residues: Flavin-dependent thymidylate synthase (244 aa).

One can recognise a ThyX domain in the interval 2-207; that stretch reads VRVTLVNYTR…ELRPIIKWAK (206 aa). FAD-binding positions include serine 56, 80 to 82, and glutamine 88; that span reads RHR. DUMP-binding positions include 77–80, 88–92, and arginine 146; these read QLVR and QQSQR. A ThyX motif motif is present at residues 80 to 90; the sequence is RHRIASYTQQS. Residues 162–164 and histidine 168 each bind FAD; that span reads NLR. Arginine 173 provides a ligand contact to dUMP. The active-site Involved in ionization of N3 of dUMP, leading to its activation is the arginine 173.

This sequence belongs to the thymidylate synthase ThyX family. In terms of assembly, homotetramer. FAD is required as a cofactor.

It carries out the reaction dUMP + (6R)-5,10-methylene-5,6,7,8-tetrahydrofolate + NADPH + H(+) = dTMP + (6S)-5,6,7,8-tetrahydrofolate + NADP(+). It functions in the pathway pyrimidine metabolism; dTTP biosynthesis. Catalyzes the reductive methylation of 2'-deoxyuridine-5'-monophosphate (dUMP) to 2'-deoxythymidine-5'-monophosphate (dTMP) while utilizing 5,10-methylenetetrahydrofolate (mTHF) as the methyl donor, and NADPH and FADH(2) as the reductant. The protein is Flavin-dependent thymidylate synthase of Pyrococcus abyssi (strain GE5 / Orsay).